A 207-amino-acid chain; its full sequence is MPKVALYNQNGQTIGEIELNDAVFGIEPNKHVLFEAVIMQRASMRQGTHKTKNRAEVSGGGRKPWRQKGTGRARQGSIRSPQWRGGGTVFGPVPRSYSYKLPKKVRRLAIKSALSSKVLENDIVVLDQLSLEAPKTKEMVKILNNLAVDRKALIVTDELNENVYLSARNIPGVKVVAANGINVLDVLSHDKLVITKAAVEKVEEVLA.

The interval 44–85 (MRQGTHKTKNRAEVSGGGRKPWRQKGTGRARQGSIRSPQWRG) is disordered.

It belongs to the universal ribosomal protein uL4 family. As to quaternary structure, part of the 50S ribosomal subunit.

Functionally, one of the primary rRNA binding proteins, this protein initially binds near the 5'-end of the 23S rRNA. It is important during the early stages of 50S assembly. It makes multiple contacts with different domains of the 23S rRNA in the assembled 50S subunit and ribosome. Forms part of the polypeptide exit tunnel. The polypeptide is Large ribosomal subunit protein uL4 (Geobacillus thermodenitrificans (strain NG80-2)).